The following is a 1567-amino-acid chain: Transmembrane protein 131 homolog (1567 aa).

The first 32 residues, 1 to 32 (MPTQVQMRPLLRIFAEPILLILIFLFTLGAKG), serve as a signal peptide directing secretion. Topologically, residues 33–1049 (EKVLQETFLG…RPGWESSLKN (1017 aa)) are lumenal. The segment at 55 to 228 (RLVPSRLDFG…TLKPVIRISF (174 aa)) is papD-L domain. 13 N-linked (GlcNAc...) asparagine glycosylation sites follow: asparagine 84, asparagine 114, asparagine 168, asparagine 235, asparagine 316, asparagine 317, asparagine 342, asparagine 372, asparagine 409, asparagine 462, asparagine 563, asparagine 890, and asparagine 1013. Residues 1050–1070 (AALVVLLASFGLVLVAAVFDA) traverse the membrane as a helical segment. Over 1071–1567 (KAIMVQQNAY…SQRNNHNHMN (497 aa)) the chain is Cytoplasmic. The stretch at 1096–1130 (RNIVKLQAEEAAAKAESVQQQQKVKNGQLKELRKR) forms a coiled coil. Disordered regions lie at residues 1112–1337 (SVQQ…SPDA), 1364–1386 (PTDN…IGDN), and 1502–1567 (PGLE…NHMN). Low complexity-rich tracts occupy residues 1132–1150 (VVNS…SPWS) and 1166–1183 (KTVV…APAA). 2 positions are modified to phosphoserine: serine 1201 and serine 1258. A compositionally biased stretch (polar residues) spans 1247-1259 (AKSSPPQQENISP). Positions 1284 to 1298 (PGRERERERRSKDQK) are enriched in basic and acidic residues. Residues 1319–1331 (KLNFGQTTNSTSP) are compositionally biased toward polar residues. Polar residues-rich tracts occupy residues 1507–1519 (SARQ…QEQV) and 1536–1561 (LPTQ…SQRN).

The protein belongs to the TMEM131 family. In terms of assembly, may interact (via PapD-L domain) with collagen proteins (via C-terminus); the interaction is direct and is involved in assembly and TRAPPIII ER-to-Golgi transport complex-dependent secretion of collagen.

The protein localises to the membrane. Collagen binding transmembrane protein involved in collagen secretion, probably by recruiting the ER-to-Golgi transport complex TRAPPIII. The protein is Transmembrane protein 131 homolog of Drosophila melanogaster (Fruit fly).